The sequence spans 69 residues: Cytochrome c oxidase subunit 8A, mitochondrial (69 aa).

Residues 1–25 constitute a mitochondrion transit peptide; the sequence is MSSLTPLLLRSLTGPARRLMVPRAQ. The SIFI-degron signature appears at 2–19; sequence SSLTPLLLRSLTGPARRL. The Mitochondrial matrix portion of the chain corresponds to 26–36; that stretch reads VHSKPPREQLG. The helical transmembrane segment at 37–60 threads the bilayer; sequence VLDITIGLTSCFVCCLLPAGWVLS. At 61 to 69 the chain is on the mitochondrial intermembrane side; sequence HLESYKKRE.

The protein belongs to the cytochrome c oxidase VIII family. Component of the cytochrome c oxidase (complex IV, CIV), a multisubunit enzyme composed of 14 subunits. The complex is composed of a catalytic core of 3 subunits MT-CO1, MT-CO2 and MT-CO3, encoded in the mitochondrial DNA, and 11 supernumerary subunits COX4I, COX5A, COX5B, COX6A, COX6B, COX6C, COX7A, COX7B, COX7C, COX8 and NDUFA4, which are encoded in the nuclear genome. The complex exists as a monomer or a dimer and forms supercomplexes (SCs) in the inner mitochondrial membrane with NADH-ubiquinone oxidoreductase (complex I, CI) and ubiquinol-cytochrome c oxidoreductase (cytochrome b-c1 complex, complex III, CIII), resulting in different assemblies (supercomplex SCI(1)III(2)IV(1) and megacomplex MCI(2)III(2)IV(2)). In terms of processing, in response to mitochondrial stress, the precursor protein is ubiquitinated by the SIFI complex in the cytoplasm before mitochondrial import, leading to its degradation. Within the SIFI complex, UBR4 initiates ubiquitin chain that are further elongated or branched by KCMF1.

It is found in the mitochondrion inner membrane. It functions in the pathway energy metabolism; oxidative phosphorylation. Its function is as follows. Component of the cytochrome c oxidase, the last enzyme in the mitochondrial electron transport chain which drives oxidative phosphorylation. The respiratory chain contains 3 multisubunit complexes succinate dehydrogenase (complex II, CII), ubiquinol-cytochrome c oxidoreductase (cytochrome b-c1 complex, complex III, CIII) and cytochrome c oxidase (complex IV, CIV), that cooperate to transfer electrons derived from NADH and succinate to molecular oxygen, creating an electrochemical gradient over the inner membrane that drives transmembrane transport and the ATP synthase. Cytochrome c oxidase is the component of the respiratory chain that catalyzes the reduction of oxygen to water. Electrons originating from reduced cytochrome c in the intermembrane space (IMS) are transferred via the dinuclear copper A center (CU(A)) of subunit 2 and heme A of subunit 1 to the active site in subunit 1, a binuclear center (BNC) formed by heme A3 and copper B (CU(B)). The BNC reduces molecular oxygen to 2 water molecules using 4 electrons from cytochrome c in the IMS and 4 protons from the mitochondrial matrix. This chain is Cytochrome c oxidase subunit 8A, mitochondrial (Cox8a), found in Rattus norvegicus (Rat).